The chain runs to 495 residues: COP9 signalosome complex subunit 2 (495 aa).

Residues 1 to 26 are disordered; it reads MGDEYMDDDEDYGFEYEDDSGSEPDV. A PCI domain is found at 254 to 416; it reads AHTDFFEAFK…GMIEMPKNKK (163 aa). A disordered region spans residues 426-468; it reads PNAGDQGTTKSDSKPGTSSEPSTTTSVTSSILQGPPATSSCHQ. Polar residues predominate over residues 430–441; the sequence is DQGTTKSDSKPG. The span at 442–455 shows a compositional bias: low complexity; that stretch reads TSSEPSTTTSVTSS.

This sequence belongs to the CSN2 family. Component of the CSN complex, probably composed of csn-1, csn-2, csn-3, csn-4, csn-5, csn-6 and csn-7. Within the complex it probably interacts directly with csn-1, csn-3 and csn-4.

It is found in the cytoplasm. Its subcellular location is the nucleus. Essential component of the COP9 signalosome complex (CSN), a complex involved in various cellular and developmental processes. The CSN complex is an essential regulator of the ubiquitin (Ubl) conjugation pathway by mediating the deneddylation of the cullin subunits of the SCF-type E3 ligase complexes, leading to decrease the Ubl ligase activity of SCF. The CSN complex plays an essential role in embryogenesis and oogenesis and is required to regulate microtubule stability in the early embryo. Mediates mei-3/katanin targeting for degradation at the meiosis to mitosis transition via deneddylation of cul-3. The polypeptide is COP9 signalosome complex subunit 2 (csn-2) (Caenorhabditis elegans).